The primary structure comprises 387 residues: Putative acid--amine ligase YjfC (387 aa).

An ATP-binding site is contributed by 101–103 (RMD). The Mg(2+) site is built by Asp103, Glu116, and Asn118. ATP-binding positions include Lys265, Lys302, Gly309, Gln337, and 372 to 374 (LIT).

It belongs to the glutathionylspermidine synthase preATP-grasp family.

Its function is as follows. May be a ligase forming an amide bond. Shows ATPase activity. Despite its similarity to the C-terminal synthetase domain of Gss, is not a glutathionylspermidine (Gsp) synthetase. Cannot synthesize Gsp, glutathione (GSH), or GSH intermediates, from GSH and spermidine, cysteine and glutamate, gamma-glutamylcysteine and spermidine, and gamma-glutamylcysteine and glycine. Does not bind to Gsp. This chain is Putative acid--amine ligase YjfC (yjfC), found in Escherichia coli (strain K12).